Here is a 5161-residue protein sequence, read N- to C-terminus: Nonribosomal peptide synthetase TES (5161 aa).

Positions 37–436 (EEQAIARPNA…GRKDSQTKVR (400 aa)) are adenylation 1. The Carrier 1 domain maps to 569 to 645 (QPETEKEQIL…KLTSAAIPSV (77 aa)). Serine 606 is subject to O-(pantetheine 4'-phosphoryl)serine. The condensation 1 stretch occupies residues 659-1098 (GHVAQSFAQG…LLCDVELSKL (440 aa)). The interval 1122 to 1522 (RQQTSLCPSR…GRMDGQVKIR (401 aa)) is adenylation 2. The methyltransferase (M) domain 1 stretch occupies residues 1630-1742 (MNEWLDDTID…YLFKTTQQLL (113 aa)). The Carrier 2 domain occupies 2068–2141 (TRAESKIQQL…QLAAVAQEHV (74 aa)). Residue serine 2102 is modified to O-(pantetheine 4'-phosphoryl)serine. The interval 2179–2593 (EDIYPCSPLQ…MLTQDDEQQL (415 aa)) is condensation 2. Residues 2614-3010 (DQAKSRPEAD…GRKDGQVKVR (397 aa)) are adenylation 3. The 77-residue stretch at 3139-3215 (KPETKHEMAL…RLANRLVDPP (77 aa)) folds into the Carrier 3 domain. Serine 3176 is modified (O-(pantetheine 4'-phosphoryl)serine). The interval 3232–3668 (LQSFAQGRLW…VVPLMTVEAH (437 aa)) is condensation 3. The adenylation 4 stretch occupies residues 3694–4098 (FRQQAAMQPS…GRIDGQVKIR (405 aa)). The tract at residues 4203–4329 (EMKEWLEETI…KVDGVKTLFF (127 aa)) is methyltransferase (M) domain 2. One can recognise a Carrier 4 domain in the interval 4643–4725 (RELSTAELKV…QFSQHEGEQK (83 aa)). Serine 4680 is subject to O-(pantetheine 4'-phosphoryl)serine. The segment at 4785-5093 (FFLNLGTRVD…HQNLNEHPEF (309 aa)) is condensation 4.

It belongs to the NRP synthetase family.

It participates in phytotoxin biosynthesis. Functionally, nonribosomal peptide synthetase; part of the gene cluster that mediates the biosynthesis of the phytotoxin tentoxin, an inhibitor the F1-ATPase activity of chloroplasts, resulting in chlorosis in sensitive plants. Tentoxin is a cyclic tetrapeptide that consists of four amino acid residues: glycine (Gly), alanine (Ala), leucine (Leu), and dehydrophenylalanine (DPhe). In addition, both the Ala and DPhe residues are N-methylated. The nonribosomal peptide synthetase TES assembles tentoxin from the four substrate amino acids. The adenylation domains of each of the 4 modules are responsible for the activation of Gly, Ala, Leu and DPhe, respectively. In addition, the N-methyltransferase domains in the second and fourth modules of TES could be responsible for N-methylation of Ala and DPhe residues. Finally, the condensation domain located in the termination module probably catalyzes the formation of the intramolecular macrocyclization and then the release of tentoxin. The cytochrome P450 monooxygenase TES1 is predicted to be involved in the formation of DPhe. The protein is Nonribosomal peptide synthetase TES of Alternaria alternata (Alternaria rot fungus).